A 206-amino-acid polypeptide reads, in one-letter code: Ras-related protein RABG3e (206 aa).

GTP is bound at residue 15–22 (GDSGVGKT). An Effector region motif is present at residues 37–45 (YKATIGADF). Residues 63–67 (DTAGQ), 125–128 (NKID), and 158–159 (SA) each bind GTP. S-geranylgeranyl cysteine attachment occurs at residues C204 and C206. C206 bears the Cysteine methyl ester mark.

Belongs to the small GTPase superfamily. Rab family.

The protein resides in the cell membrane. Its function is as follows. Intracellular vesicle trafficking and protein transport. May play a role in adaptation to stress by recylcing macromolecules in specific cellular compartments. In Arabidopsis thaliana (Mouse-ear cress), this protein is Ras-related protein RABG3e (RABG3E).